The sequence spans 140 residues: Large ribosomal subunit protein uL16 (140 aa).

Residues 1-16 show a composition bias toward basic residues; the sequence is MLMPKRVKHRKQMKGR. The tract at residues 1-20 is disordered; that stretch reads MLMPKRVKHRKQMKGRMKGD.

Belongs to the universal ribosomal protein uL16 family. Part of the 50S ribosomal subunit.

Its function is as follows. Binds 23S rRNA and is also seen to make contacts with the A and possibly P site tRNAs. The sequence is that of Large ribosomal subunit protein uL16 from Geobacter sulfurreducens (strain ATCC 51573 / DSM 12127 / PCA).